The sequence spans 153 residues: Deoxyuridine 5'-triphosphate nucleotidohydrolase (153 aa).

Substrate-binding positions include 71–73 (RSG), N84, 88–90 (TID), and K98.

It belongs to the dUTPase family. It depends on Mg(2+) as a cofactor.

It carries out the reaction dUTP + H2O = dUMP + diphosphate + H(+). It participates in pyrimidine metabolism; dUMP biosynthesis; dUMP from dCTP (dUTP route): step 2/2. Its function is as follows. This enzyme is involved in nucleotide metabolism: it produces dUMP, the immediate precursor of thymidine nucleotides and it decreases the intracellular concentration of dUTP so that uracil cannot be incorporated into DNA. This is Deoxyuridine 5'-triphosphate nucleotidohydrolase from Ehrlichia canis (strain Jake).